The sequence spans 421 residues: Phaseolin, beta-type (421 aa).

The first 24 residues, 1 to 24 (MMRARVPLLLLGILFLASLSASFA), serve as a signal peptide directing secretion. The region spanning 237–390 (KSLSKQDNTI…TFSGSGDEVM (154 aa)) is the Cupin type-1 domain. N-linked (GlcNAc...) asparagine glycosylation is found at N252 and N341.

Belongs to the 7S seed storage protein family. As to quaternary structure, homotrimer that associates to form a dodecamer.

It localises to the vacuole. Its subcellular location is the aleurone grain. Major seed storage protein. This Phaseolus vulgaris (Kidney bean) protein is Phaseolin, beta-type.